We begin with the raw amino-acid sequence, 695 residues long: Elongation factor G (695 aa).

The tr-type G domain maps to Ser5 to Thr280. GTP-binding positions include Ala14–Thr21, Asp78–His82, and Asn132–Asp135. Residues Pro279–Val299 form a disordered region.

This sequence belongs to the TRAFAC class translation factor GTPase superfamily. Classic translation factor GTPase family. EF-G/EF-2 subfamily.

It localises to the cytoplasm. Functionally, catalyzes the GTP-dependent ribosomal translocation step during translation elongation. During this step, the ribosome changes from the pre-translocational (PRE) to the post-translocational (POST) state as the newly formed A-site-bound peptidyl-tRNA and P-site-bound deacylated tRNA move to the P and E sites, respectively. Catalyzes the coordinated movement of the two tRNA molecules, the mRNA and conformational changes in the ribosome. The chain is Elongation factor G from Alteromonas mediterranea (strain DSM 17117 / CIP 110805 / LMG 28347 / Deep ecotype).